Consider the following 120-residue polypeptide: MLVLANYFPILVFLGISLFIAVLALTMGWFFGPRRPDKAKLSPYECGFEAFQDARLPFDVRFYLVAILFIIFDLETAFLFPWAVVLRHIGWFGFWAMMVFLAILVVGFIYEWKRGALEWE.

The next 3 helical transmembrane spans lie at 10-30 (ILVFLGISLFIAVLALTMGWF), 65-85 (VAILFIIFDLETAFLFPWAVV), and 89-109 (IGWFGFWAMMVFLAILVVGFI).

The protein belongs to the complex I subunit 3 family. NDH-1 is composed of 14 different subunits. Subunits NuoA, H, J, K, L, M, N constitute the membrane sector of the complex.

The protein resides in the cell inner membrane. The catalysed reaction is a quinone + NADH + 5 H(+)(in) = a quinol + NAD(+) + 4 H(+)(out). Functionally, NDH-1 shuttles electrons from NADH, via FMN and iron-sulfur (Fe-S) centers, to quinones in the respiratory chain. The immediate electron acceptor for the enzyme in this species is believed to be ubiquinone. Couples the redox reaction to proton translocation (for every two electrons transferred, four hydrogen ions are translocated across the cytoplasmic membrane), and thus conserves the redox energy in a proton gradient. The protein is NADH-quinone oxidoreductase subunit A of Coxiella burnetii (strain Dugway 5J108-111).